The primary structure comprises 311 residues: Bifunctional protein FolD (311 aa).

NADP(+) is bound at residue 174 to 176; that stretch reads GKG.

Belongs to the tetrahydrofolate dehydrogenase/cyclohydrolase family. In terms of assembly, homodimer.

The catalysed reaction is (6R)-5,10-methylene-5,6,7,8-tetrahydrofolate + NADP(+) = (6R)-5,10-methenyltetrahydrofolate + NADPH. It catalyses the reaction (6R)-5,10-methenyltetrahydrofolate + H2O = (6R)-10-formyltetrahydrofolate + H(+). It functions in the pathway one-carbon metabolism; tetrahydrofolate interconversion. Functionally, catalyzes the oxidation of 5,10-methylenetetrahydrofolate to 5,10-methenyltetrahydrofolate and then the hydrolysis of 5,10-methenyltetrahydrofolate to 10-formyltetrahydrofolate. The protein is Bifunctional protein FolD of Pyrobaculum neutrophilum (strain DSM 2338 / JCM 9278 / NBRC 100436 / V24Sta) (Thermoproteus neutrophilus).